A 944-amino-acid chain; its full sequence is ATP-dependent helicase fft1 (944 aa).

Disordered regions lie at residues 89–109 and 174–246; these read AAYDPHDQPPERDVSLKESSN and SAQK…NSIP. The span at 92–108 shows a compositional bias: basic and acidic residues; that stretch reads DPHDQPPERDVSLKESS. Residues 174-184 show a composition bias toward polar residues; sequence SAQKLNNQPIE. A compositionally biased stretch (basic and acidic residues) spans 186 to 203; it reads SSVDKENAKRKRYVEEGT. A compositionally biased stretch (acidic residues) spans 217–227; sequence LSDEETNEDDL. Polar residues predominate over residues 230-246; the sequence is QSPTACTTDANIDNSIP. In terms of domain architecture, Helicase ATP-binding spans 426-592; it reads CLMYKAKLSG…ISLLAFMLPK (167 aa). Residue 439–446 coordinates ATP; that stretch reads DEMGLGKT. The DEGH box motif lies at 543–546; that stretch reads DEGH. The Helicase C-terminal domain maps to 766 to 923; it reads KVKKLCSLLK…DSEKIQKEIS (158 aa).

Belongs to the SNF2/RAD54 helicase family.

The protein resides in the nucleus. It carries out the reaction ATP + H2O = ADP + phosphate + H(+). In terms of biological role, DNA helicase that possesses intrinsic ATP-dependent nucleosome-remodeling activity and is required for heterochromatin organization. The protein is ATP-dependent helicase fft1 (fft1) of Schizosaccharomyces pombe (strain 972 / ATCC 24843) (Fission yeast).